The chain runs to 120 residues: NAD(P)H-quinone oxidoreductase subunit 3, chloroplastic (120 aa).

A run of 3 helical transmembrane segments spans residues 3–23, 64–84, and 89–109; these read ILEGYGSVLAFFVIASLIPVI, MFALVFVVFDVETLFLYPWAV, and LGLSAFFEVLIFIIVLLIGLV.

It belongs to the complex I subunit 3 family. NDH is composed of at least 16 different subunits, 5 of which are encoded in the nucleus.

It localises to the plastid. Its subcellular location is the chloroplast thylakoid membrane. It carries out the reaction a plastoquinone + NADH + (n+1) H(+)(in) = a plastoquinol + NAD(+) + n H(+)(out). It catalyses the reaction a plastoquinone + NADPH + (n+1) H(+)(in) = a plastoquinol + NADP(+) + n H(+)(out). Its function is as follows. NDH shuttles electrons from NAD(P)H:plastoquinone, via FMN and iron-sulfur (Fe-S) centers, to quinones in the photosynthetic chain and possibly in a chloroplast respiratory chain. The immediate electron acceptor for the enzyme in this species is believed to be plastoquinone. Couples the redox reaction to proton translocation, and thus conserves the redox energy in a proton gradient. The protein is NAD(P)H-quinone oxidoreductase subunit 3, chloroplastic of Nephroselmis olivacea (Green alga).